The chain runs to 172 residues: ATP synthase subunit b (172 aa).

The helical transmembrane segment at 12–32 threads the bilayer; that stretch reads SLYIGDLVFYIVTFIILMLLV. Basic and acidic residues-rich tracts occupy residues 63–74 and 116–131; these read ESAEKMAAKRQA and AQKDAEQARRDALNSA. Residues 63-131 are disordered; it reads ESAEKMAAKR…QARRDALNSA (69 aa).

The protein belongs to the ATPase B chain family. In terms of assembly, F-type ATPases have 2 components, F(1) - the catalytic core - and F(0) - the membrane proton channel. F(1) has five subunits: alpha(3), beta(3), gamma(1), delta(1), epsilon(1). F(0) has three main subunits: a(1), b(2) and c(10-14). The alpha and beta chains form an alternating ring which encloses part of the gamma chain. F(1) is attached to F(0) by a central stalk formed by the gamma and epsilon chains, while a peripheral stalk is formed by the delta and b chains.

The protein resides in the cell membrane. Functionally, f(1)F(0) ATP synthase produces ATP from ADP in the presence of a proton or sodium gradient. F-type ATPases consist of two structural domains, F(1) containing the extramembraneous catalytic core and F(0) containing the membrane proton channel, linked together by a central stalk and a peripheral stalk. During catalysis, ATP synthesis in the catalytic domain of F(1) is coupled via a rotary mechanism of the central stalk subunits to proton translocation. In terms of biological role, component of the F(0) channel, it forms part of the peripheral stalk, linking F(1) to F(0). This Limosilactobacillus reuteri (strain DSM 20016) (Lactobacillus reuteri) protein is ATP synthase subunit b.